The primary structure comprises 943 residues: Protein translocase subunit SecA (943 aa).

Residues Gln90, 108–112 (GEGKT), and Asp509 contribute to the ATP site. A disordered region spans residues 535 to 560 (PNNEHKPPIPKQRSSKSKGGFSSKVG). Positions 551–560 (SKGGFSSKVG) are enriched in low complexity.

Belongs to the SecA family. Monomer and homodimer. Part of the essential Sec protein translocation apparatus which comprises SecA, SecYEG and auxiliary proteins SecDF. Other proteins may also be involved.

It is found in the cell inner membrane. The protein resides in the cellular thylakoid membrane. The protein localises to the cytoplasm. The enzyme catalyses ATP + H2O + cellular proteinSide 1 = ADP + phosphate + cellular proteinSide 2.. Part of the Sec protein translocase complex. Interacts with the SecYEG preprotein conducting channel. Has a central role in coupling the hydrolysis of ATP to the transfer of proteins into and across the cell membrane, serving as an ATP-driven molecular motor driving the stepwise translocation of polypeptide chains across the membrane. In terms of biological role, probably participates in protein translocation into and across both the cytoplasmic and thylakoid membranes in cyanobacterial cells. This is Protein translocase subunit SecA from Prochlorococcus marinus (strain MIT 9312).